A 227-amino-acid chain; its full sequence is Esterase OVCA2 (227 aa).

Active-site charge relay system residues include Ser119, Asp179, and His206.

Belongs to the LovG family.

It carries out the reaction a carboxylic ester + H2O = an alcohol + a carboxylate + H(+). Exhibits ester hydrolase activity with a strong preference for long-chain alkyl ester substrates and high selectivity against a variety of short, branched, and substituted esters. Is able to hydrolyze ester bonds within a wide range of p-nitrophenyl derivatives (C2-C14) in vitro, with a strong preference toward substrates of &gt;8 carbons. The protein is Esterase OVCA2 (OVCA2) of Bos taurus (Bovine).